A 262-amino-acid polypeptide reads, in one-letter code: ATP synthase subunit a (262 aa).

5 helical membrane-spanning segments follow: residues 24–44, 85–105, 129–149, 194–214, and 228–248; these read AVHL…LVVF, IAPL…IDLV, DISA…FYTV, LFGN…MYMA, and LVWA…FMML.

This sequence belongs to the ATPase A chain family. F-type ATPases have 2 components, CF(1) - the catalytic core - and CF(0) - the membrane proton channel. CF(1) has five subunits: alpha(3), beta(3), gamma(1), delta(1), epsilon(1). CF(0) has three main subunits: a(1), b(2) and c(9-12). The alpha and beta chains form an alternating ring which encloses part of the gamma chain. CF(1) is attached to CF(0) by a central stalk formed by the gamma and epsilon chains, while a peripheral stalk is formed by the delta and b chains.

Its subcellular location is the cell inner membrane. Key component of the proton channel; it plays a direct role in the translocation of protons across the membrane. This is ATP synthase subunit a from Haemophilus ducreyi (strain 35000HP / ATCC 700724).